A 114-amino-acid chain; its full sequence is Protein ELF4-LIKE 4 (114 aa).

Residues Ser-87 to Gly-114 are disordered. Residues Asp-89 to Leu-100 show a composition bias toward polar residues.

This sequence belongs to the EARLY FLOWERING 4 family. In terms of assembly, homodimer.

It localises to the nucleus. In terms of biological role, component of the central CCA1/LHY-TOC1 feedback loop in the circadian clock that promotes clock accuracy and is required for sustained rhythms in the absence of daily light/dark cycles. The protein is Protein ELF4-LIKE 4 (EFL4) of Arabidopsis thaliana (Mouse-ear cress).